Reading from the N-terminus, the 400-residue chain is Cytohesin-2 (400 aa).

Residues 10 to 67 (DLTPEERMELENIRRRKQELLVEIQRLREELSEAMSEVEGLEANEGSKTLQRNRKMAM) adopt a coiled-coil conformation. The SEC7 domain occupies 72–201 (FNMDPKKGIQ…VIMLNTSLHN (130 aa)). The PH domain occupies 259 to 376 (NPDREGWLLK…WIKSIQAAVS (118 aa)). Residues 268–276 (KLGGGRVKT), Arg-280, Tyr-291, Arg-301, Lys-339, Asn-350, and His-351 each bind a 1,2-diacyl-sn-glycero-3-phospho-(1D-myo-inositol-3,4,5-trisphosphate). A C-terminal autoinhibitory region region spans residues 387 to 395 (RKKRISVKK).

In terms of assembly, heteromer. Composed of TAMALIN, CYTH2 and at least one GRM1. Interacts with ARRB1. Interacts with ARL4D; the interaction is direct. Directly interacts with CCDC120 through the coiled coil domain; this interaction stabilizes CCDC120, possibly by preventing its ubiquitination, and is required for neurite growth in a neuroblastoma cell line. Interacts with FRMD4A. Interacts (via N-terminal domain) with INAVA (via N-terminal domain). In terms of tissue distribution, present in all tissues tested, with highest protein levels in brain and adrenal.

The protein localises to the cell membrane. Its subcellular location is the cytoplasm. It is found in the cell projection. It localises to the growth cone. The protein resides in the cell junction. The protein localises to the tight junction. Its subcellular location is the adherens junction. In terms of biological role, acts as a guanine-nucleotide exchange factor (GEF). Promotes guanine-nucleotide exchange on ARF1, ARF3 and ARF6. Activates ARF factors through replacement of GDP with GTP. The cell membrane form, in association with ARL4 proteins, recruits ARF6 to the plasma membrane. Involved in neurite growth. The sequence is that of Cytohesin-2 (Cyth2) from Mus musculus (Mouse).